The primary structure comprises 249 residues: Tegument protein UL51 homolog (249 aa).

The protein belongs to the herpesviridae UL51 family. Oligomerizes. Interacts with MDV019; this interaction mediates MDV019 incorporation to virions. Phosphorylated.

The protein localises to the virion tegument. It localises to the host cytoplasm. Its subcellular location is the host Golgi apparatus. Plays several roles during the time course of infection, including egress of virus particles from the perinuclear space and secondary envelopment of cytoplasmic capsids that bud into specific trans-Golgi network (TGN)-derived membranes. The chain is Tegument protein UL51 homolog (MDV065) from Gallus gallus (Chicken).